The chain runs to 303 residues: Heme A synthase (303 aa).

Topologically, residues 1-8 are cytoplasmic; it reads MFGKKNLK. A helical membrane pass occupies residues 9–29; sequence WLGVVATLMMTFVQLGGALVT. Topologically, residues 30–67 are extracellular; it reads KTGSADGCGSSWPLCHGALIPEFFPIDTIIELSHRAVS. An intrachain disulfide couples Cys37 to Cys44. Glu60 is a catalytic residue. His63 serves as a coordination point for heme o. The helical transmembrane segment at 68–88 threads the bilayer; it reads ALSLLMVLWLVITAWKHIGYI. Residues 89–93 lie on the Cytoplasmic side of the membrane; it reads KEIKP. A helical transmembrane segment spans residues 94-114; the sequence is LSIISVGFLLLQALIGAAAVI. The Extracellular segment spans residues 115–125; the sequence is WQQNDYVLALH. His125 provides a ligand contact to heme o. A helical transmembrane segment spans residues 126-146; sequence FGISLISFSSVFLITLIIFSI. Residues 147-163 lie on the Cytoplasmic side of the membrane; it reads DQKYEAAELYIKKPLRR. Residues 164 to 184 form a helical membrane-spanning segment; the sequence is LTWLMAIIIYCGVYTGALVRH. Topologically, residues 185 to 215 are extracellular; that stretch reads ADASLAYGGWPLPFHDLVPHSEQDWVQLTHR. His214 lines the heme b pocket. A helical membrane pass occupies residues 216–236; sequence IMAFIVFTIIMITYIHAVKNY. The Cytoplasmic segment spans residues 237 to 244; that stretch reads PNNRTVHY. Residues 245–265 form a helical membrane-spanning segment; it reads GYTAAFILVILQVITGALSIM. At 266-270 the chain is on the extracellular side; that stretch reads TNVNL. The helical transmembrane segment at 271–291 threads the bilayer; the sequence is IIALFHALFITYLFGMTTYFI. His276 serves as a coordination point for heme b. At 292–303 the chain is on the cytoplasmic side; it reads MLMLRSVRSDKQ.

It belongs to the COX15/CtaA family. Type 1 subfamily. As to quaternary structure, interacts with CtaB. Heme b is required as a cofactor.

The protein localises to the cell membrane. The enzyme catalyses Fe(II)-heme o + 2 A + H2O = Fe(II)-heme a + 2 AH2. Its pathway is porphyrin-containing compound metabolism; heme A biosynthesis; heme A from heme O: step 1/1. Catalyzes the conversion of heme O to heme A by two successive hydroxylations of the methyl group at C8. The first hydroxylation forms heme I, the second hydroxylation results in an unstable dihydroxymethyl group, which spontaneously dehydrates, resulting in the formyl group of heme A. The sequence is that of Heme A synthase from Staphylococcus aureus (strain bovine RF122 / ET3-1).